Consider the following 284-residue polypeptide: Bifunctional protein FolD (284 aa).

NADP(+) contacts are provided by residues 166–168 (GRS) and serine 191.

Belongs to the tetrahydrofolate dehydrogenase/cyclohydrolase family. Homodimer.

It catalyses the reaction (6R)-5,10-methylene-5,6,7,8-tetrahydrofolate + NADP(+) = (6R)-5,10-methenyltetrahydrofolate + NADPH. The enzyme catalyses (6R)-5,10-methenyltetrahydrofolate + H2O = (6R)-10-formyltetrahydrofolate + H(+). Its pathway is one-carbon metabolism; tetrahydrofolate interconversion. Catalyzes the oxidation of 5,10-methylenetetrahydrofolate to 5,10-methenyltetrahydrofolate and then the hydrolysis of 5,10-methenyltetrahydrofolate to 10-formyltetrahydrofolate. This is Bifunctional protein FolD from Leptospira interrogans serogroup Icterohaemorrhagiae serovar copenhageni (strain Fiocruz L1-130).